A 418-amino-acid polypeptide reads, in one-letter code: Serine hydroxymethyltransferase (418 aa).

(6S)-5,6,7,8-tetrahydrofolate contacts are provided by residues Leu-121 and 125 to 127 (GHL). An N6-(pyridoxal phosphate)lysine modification is found at Lys-230. Residue 355 to 357 (SPF) coordinates (6S)-5,6,7,8-tetrahydrofolate.

Belongs to the SHMT family. Homodimer. The cofactor is pyridoxal 5'-phosphate.

It localises to the cytoplasm. The catalysed reaction is (6R)-5,10-methylene-5,6,7,8-tetrahydrofolate + glycine + H2O = (6S)-5,6,7,8-tetrahydrofolate + L-serine. It functions in the pathway one-carbon metabolism; tetrahydrofolate interconversion. The protein operates within amino-acid biosynthesis; glycine biosynthesis; glycine from L-serine: step 1/1. Functionally, catalyzes the reversible interconversion of serine and glycine with tetrahydrofolate (THF) serving as the one-carbon carrier. This reaction serves as the major source of one-carbon groups required for the biosynthesis of purines, thymidylate, methionine, and other important biomolecules. Also exhibits THF-independent aldolase activity toward beta-hydroxyamino acids, producing glycine and aldehydes, via a retro-aldol mechanism. This Streptococcus agalactiae serotype V (strain ATCC BAA-611 / 2603 V/R) protein is Serine hydroxymethyltransferase.